Consider the following 146-residue polypeptide: Acidic phospholipase A2 S8-51 (146 aa).

Positions M1–A19 are cleaved as a signal peptide. The propeptide occupies A20–L27. Disulfide bonds link C38/C98, C54/C145, C56/C72, C71/C126, C78/C119, C87/C112, and C105/C117. Ca(2+) contacts are provided by Y55, G57, and G59. Residue H75 is part of the active site. D76 serves as a coordination point for Ca(2+). The active site involves D120.

It belongs to the phospholipase A2 family. Group I subfamily. D49 sub-subfamily. Ca(2+) is required as a cofactor. In terms of tissue distribution, expressed by the venom gland.

It localises to the secreted. The enzyme catalyses a 1,2-diacyl-sn-glycero-3-phosphocholine + H2O = a 1-acyl-sn-glycero-3-phosphocholine + a fatty acid + H(+). Snake venom phospholipase A2 (PLA2) that inhibits collagen-induced platelet aggregation. PLA2 catalyzes the calcium-dependent hydrolysis of the 2-acyl groups in 3-sn-phosphoglycerides. The sequence is that of Acidic phospholipase A2 S8-51 from Austrelaps superbus (Lowland copperhead snake).